Consider the following 1238-residue polypeptide: uncharacterized protein (1238 aa).

Disordered regions lie at residues 1–38, 122–156, 229–439, 660–1016, 1051–1083, and 1098–1191; these read MSSK…DISS, SSTP…RPSF, PKNN…KNKE, KNKL…TGAA, EEED…KLNS, and KKSG…NASR. Low complexity-rich tracts occupy residues 10–26, 129–149, and 234–276; these read NKNN…NNNN, LSPF…QSPL, and QIDS…TQSQ. A compositionally biased stretch (polar residues) spans 317–343; the sequence is ELQNQTQINKSKQDLTNISQKINITTS. The span at 344 to 361 shows a compositional bias: basic and acidic residues; sequence QHDKDDLGEYRMSEKGGG. The span at 362–372 shows a compositional bias: acidic residues; sequence DDGDDDDDYDN. Positions 383-394 are enriched in basic residues; sequence TNKKQQQQHHHK. Positions 395-416 are enriched in basic and acidic residues; that stretch reads GKEESQSEYYEKEKEKEKEDIA. Low complexity-rich tracts occupy residues 417–435, 678–691, and 712–792; these read TTRA…NNIN, QQQQ…QQQE, and QPSQ…QEKQ. A compositionally biased stretch (basic and acidic residues) spans 793–805; it reads QSQEKHQSQEKHQ. 2 stretches are compositionally biased toward low complexity: residues 806–859 and 882–906; these read SQQS…SQQK and SQSQ…QSQR. Acidic residues predominate over residues 916–927; sequence ENQDSENLDDTV. Over residues 929-944 the composition is skewed to polar residues; it reads MNYNQIPSTLDHSTLQ. Positions 966–975 are enriched in basic and acidic residues; sequence EIERRRRELA. Positions 976 to 990 are enriched in acidic residues; the sequence is GEDSDEEFEILDEDQ. Composition is skewed to low complexity over residues 1062–1083 and 1108–1121; these read QNNN…KLNS and SSSS…NKKN. Polar residues predominate over residues 1123–1133; the sequence is PQPTKSVNKPR. The span at 1142–1181 shows a compositional bias: low complexity; it reads SQNRQKQSEQQQQQPQQQPQLPQQQQQQQQQQQLRQQQNE. Residues 1182–1191 are compositionally biased toward polar residues; that stretch reads NTISSLNASR.

This is an uncharacterized protein from Dictyostelium discoideum (Social amoeba).